Consider the following 150-residue polypeptide: UPF0756 membrane protein Asuc_1151 (150 aa).

A run of 4 helical transmembrane segments spans residues 1-21, 52-72, 82-102, and 123-143; these read MSLHFNSIGFLLVVLALLGVL, YGLNIGVIILTIGVLSPIVAG, LLHWKMFLSLVVGMLVAWLAG, and ILGVGLLGGIPVGPLIAAGIL.

Belongs to the UPF0756 family.

The protein resides in the cell membrane. The protein is UPF0756 membrane protein Asuc_1151 of Actinobacillus succinogenes (strain ATCC 55618 / DSM 22257 / CCUG 43843 / 130Z).